We begin with the raw amino-acid sequence, 35 residues long: Beta/delta-theraphotoxin-Pre1a (35 aa).

Disulfide bonds link Cys-3–Cys-18, Cys-10–Cys-23, and Cys-17–Cys-30.

The protein belongs to the neurotoxin 10 (Hwtx-1) family. In terms of tissue distribution, expressed by the venom gland.

It localises to the secreted. Functionally, gating-modifier toxin that both inhibits the peak current of human Nav1.1/SCN1A, rat Nav1.2/SCN2A, human Nav1.6/SCN8A, and human Nav1.7/SCN9A and concurrently inhibits fast inactivation of human Nav1.1 and rat Nav1.3/SCN3A. The relative rank order potency for Nav modulation is Nav1.3 (inactivation EC(50)=45 nM) &gt; Nav1.7 &gt; Nav1.2 &gt; Nav1.1 (inactivation) &gt; Nav1.1 &gt; Nav1.6 &gt; Nav1.3 (IC(50)=8 uM). The DII and DIV S3-S4 loops of Nav channel voltage sensors are important for the interaction of this toxin with Nav channels but cannot account for its unique subtype selectivity. It is the variability of the S1-S2 loops between NaV channels which contributes substantially to the selectivity profile observed for this toxin, particularly with regards to fast inactivation. This toxin may bind the channel in the resting state. The polypeptide is Beta/delta-theraphotoxin-Pre1a (Psalmopoeus reduncus (Costa Rican orangemouth tarantula)).